The following is an 885-amino-acid chain: MAPPSPREHQSAPATGATKPDAEMVLPGFPDADSFVKFALGSVVAVTKASGGLPQVGDEYDFYRSFPAFQAFCETQGDRLLQCMSRVMQYHGCRSNIKDRSKVTELEDKFDLLVDTNDVILERVGILLDEASGVNKHQQPVLPAGLQVPKTIVSSWNRKAGEYGKKAKAETFRLLHAKNILRPQLRFREKIDNSNTPFLPKIFVKPNARKPLPQALSKERRERPQDRPEDLDVPPALADFIHQQRAQQVEQDVFAHPYQYELDHFTPPPSVLQRPQPQLYRPVEETPCHVVSSLDELVELNEKLLGCQEFAVDLEHHSYRSFLGLTCLMQISTRTEDFIVDTLELRSDMYILNESLTDPAIVKVFHGADSDIEWLQKDFGLYVVNMFDTHQAARLLNLARHSLDHLLRLYCGVESNKQYQLADWRIRPLPEEMLNYARDDTHYLLYIYDRMRLELWERGNDQPVQLQVVWQRSRDICLKKFVKPIFTDESYLELYRKQKKHLNSQQLTAFQLLFAWRDKTARREDESYGYVLPNHMMLKIAEELPKEPQGIIACCNPVPPLVRQQINEMHLLIQQAREMPLLKSETAAGVKKSGPLPSAERLENDLFGPHDCSHAPPDNYPVTSTDGTMPLQKQPSLFDEGKEETSVDARCLLATAVITLFSEPSTEEAGKTPLTVAQKKAQSIMESFENPFRMFLPSLENKAHISQAAKFDPSSKIYEISNRWKLASQVQKEPKEAAKKKVAEQTAAREETKEESTAAVLEQPIPVRQQAALENATKKRERATSDLRTIEQKQEKKRLKSSKKAKDPDPPGKDFSPYDYSQSDFGAFAGDSKSKPSSQFDPNKVAPSGKKCFGAKKFKQSVGNKSMSFPAGKSDRGFRHNWPKR.

The span at 1 to 10 shows a compositional bias: basic and acidic residues; the sequence is MAPPSPREHQ. 2 disordered regions span residues 1-23 and 210-232; these read MAPP…PDAE and KPLP…EDLD. Residue lysine 19 forms a Glycyl lysine isopeptide (Lys-Gly) (interchain with G-Cter in SUMO2) linkage. The segment covering 217 to 230 has biased composition (basic and acidic residues); the sequence is SKERRERPQDRPED. The region spanning 289–455 is the 3'-5' exonuclease domain; sequence HVVSSLDELV…YIYDRMRLEL (167 aa). Mg(2+) is bound by residues aspartate 313, glutamate 315, aspartate 371, and aspartate 440. The HRDC domain maps to 503–583; it reads NSQQLTAFQL…QQAREMPLLK (81 aa). Lysine 583 is covalently cross-linked (Glycyl lysine isopeptide (Lys-Gly) (interchain with G-Cter in SUMO1); alternate). Lysine 583 participates in a covalent cross-link: Glycyl lysine isopeptide (Lys-Gly) (interchain with G-Cter in SUMO2); alternate. A Glycyl lysine isopeptide (Lys-Gly) (interchain with G-Cter in SUMO2) cross-link involves residue lysine 710. Residues 730–885 form a disordered region; sequence VQKEPKEAAK…RGFRHNWPKR (156 aa). 2 stretches are compositionally biased toward basic and acidic residues: residues 732 to 756 and 776 to 794; these read KEPK…KEES and ATKK…EQKQ. The residue at position 821 (serine 821) is a Phosphoserine. Residues lysine 833, lysine 859, and lysine 873 each participate in a glycyl lysine isopeptide (Lys-Gly) (interchain with G-Cter in SUMO2) cross-link.

This sequence belongs to the exosome component 10/RRP6 family. As to quaternary structure, component of the RNA exosome complex. The catalytically inactive RNA exosome core complex (Exo-9) associates with the catalytic subunit EXOSC10/RRP6 (via its N-terminus). Exo-9 may associate with DIS3 to form the nucleolar exosome complex, or DIS3L to form the cytoplasmic exosome complex. The RNA exosome complex interacts with cofactors C1D/RRP47, MPHOSPH6/MPP6 and MTREX/MTR4. Interacts with MTREX; the interaction with MTREX mediates the association of MTREX with nuclear RNA exosomes. Part of the small subunit (SSU) processome, composed of more than 70 proteins and the RNA chaperone small nucleolar RNA (snoRNA) U3. Interacts with ALYREF/THOC4. Interacts with DHX36; this interaction occurs in a RNase-insensitive manner. Interacts with NRDE2. Interacts (via C-terminus) with USP36 (via C-terminus); the interaction is facilitated by the association with RNA and promotes sumoylation of EXOSC10. It depends on Mg(2+) as a cofactor. In terms of processing, sumoylated by USP36; sumoylation does not significantly affect EXOSC10 nucleolar localization and association with core exosome and USP36, but regulates the nucleolar RNA exosome activity in rRNA processing by promoting binding of EXOSC10 to pre-rRNAs. Effects of sumoylation on EXOSC10 levels vary between different studies. Sumoylation of EXOSC10 is required for the modulation of EXOSC10 effects on cellular protein translation and cell proliferation. Sumoylation is promoted by mild hypothermia. In terms of tissue distribution, expressed in testis (at protein level).

It is found in the cytoplasm. The protein localises to the nucleus. Its subcellular location is the nucleolus. The protein resides in the nucleoplasm. Functionally, catalytic component of the RNA exosome complex which has 3'-&gt;5' exoribonuclease activity and participates in a multitude of cellular RNA processing and degradation events. In the nucleus, the RNA exosome complex is involved in proper maturation of stable RNA species such as rRNA, snRNA and snoRNA, in the elimination of RNA processing by-products and non-coding 'pervasive' transcripts, such as antisense RNA species and promoter-upstream transcripts (PROMPTs), and of mRNAs with processing defects, thereby limiting or excluding their export to the cytoplasm. Part of the small subunit (SSU) processome, first precursor of the small eukaryotic ribosomal subunit. During the assembly of the SSU processome in the nucleolus, many ribosome biogenesis factors, an RNA chaperone and ribosomal proteins associate with the nascent pre-rRNA and work in concert to generate RNA folding, modifications, rearrangements and cleavage as well as targeted degradation of pre-ribosomal RNA by the RNA exosome. The RNA exosome may be involved in Ig class switch recombination (CSR) and/or Ig variable region somatic hypermutation (SHM) by targeting AICDA deamination activity to transcribed dsDNA substrates. In the cytoplasm, the RNA exosome complex is involved in general mRNA turnover and specifically degrades inherently unstable mRNAs containing AU-rich elements (AREs) within their 3' untranslated regions, and in RNA surveillance pathways, preventing translation of aberrant mRNAs. It seems to be involved in degradation of histone mRNA. EXOSC10 is required for nucleolar localization of C1D and probably mediates the association of MTREX, C1D and MPHOSPH6 with the RNA exosome involved in the maturation of 5.8S rRNA. Plays a role in the recruitment of replication protein A complex (RPA) and RAD51 to DNA double-strand breaks caused by irradiation, contributing to DNA repair by homologous recombination. Regulates levels of damage-induced RNAs in order to prevent DNA-RNA hybrid formation at DNA double-strand breaks and limit DNA end resection after damage. Plays a role in oocyte development, maturation and survival. Required for normal testis development and mitotic division of spermatogonia. Plays a role in proper embryo development. Required for global protein translation. Required for cell proliferation. This is Exosome complex component 10 from Rattus norvegicus (Rat).